A 388-amino-acid chain; its full sequence is MTTTEEAPKSPLFEAIDKNDTEAALALLKTKEQAAQRDPSGMSVLAAAAYRGNLTLVEKAIELKCDVNDKTDGTLYTPLMFAALSGKQDVCRLLMDSGARMYLVNGIGKTASELAAFVGHHECVAIINNHITIDVIEDLLRPKVNGKYEGAEEYPDELAVFIHSLCGSHEIHPVKIIFRFSKYPDSLKYKKKILYVIDRVFEKQLRCKESNEIMSLKLWLILFSMRETSKFVESNKEKSPEEASLQYAKLISTWQEGDETRRALDVMLRNAVASFPYKHSLLHDTLQKALQKSQIGERPSAYEYIVQALFGQRIAAVCQFCSVCGHPGAKKRCTQCKLAYCSQECQKFDWPIHKKVCSFLKTRQEVSPTDETAMSLDDIQAQIAKIDV.

ANK repeat units lie at residues 40–69, 74–103, and 107–137; these read SGMS…DVND, TLYT…RMYL, and IGKT…DVIE. Zn(2+) contacts are provided by Cys-321, Cys-324, Cys-333, Cys-336, Cys-341, Cys-345, His-353, and Cys-357. The MYND-type zinc-finger motif lies at 321–357; sequence CSVCGHPGAKKRCTQCKLAYCSQECQKFDWPIHKKVC.

As to expression, expressed in many ciliated sensory neurons.

Its subcellular location is the cell projection. The protein resides in the cilium. May be involved in the trafficking and dendritic transport of signaling proteins, such as the receptor-type guanylate cyclases gcy-12 and daf-11, to the cilia. In ciliated sensory neurons, required for the calcium flux to the cytoplasm in response to onset and removal of a nitric oxide (NO) stimulus and is thereby required for the behavioral avoidance response to NO-producing organisms like P.aeruginosa. This chain is Dauer abnormal formation protein 25 (daf-25), found in Caenorhabditis elegans.